Here is a 193-residue protein sequence, read N- to C-terminus: Acyl carrier protein phosphodiesterase (193 aa).

Belongs to the AcpH family.

The catalysed reaction is holo-[ACP] + H2O = apo-[ACP] + (R)-4'-phosphopantetheine + H(+). In terms of biological role, converts holo-ACP to apo-ACP by hydrolytic cleavage of the phosphopantetheine prosthetic group from ACP. This is Acyl carrier protein phosphodiesterase from Salmonella dublin (strain CT_02021853).